The chain runs to 215 residues: Superoxide dismutase [Mn] (215 aa).

The Mn(2+) site is built by His27, His83, Asp170, and His174.

Belongs to the iron/manganese superoxide dismutase family. As to quaternary structure, homodimer. It depends on Mn(2+) as a cofactor.

The enzyme catalyses 2 superoxide + 2 H(+) = H2O2 + O2. Destroys superoxide anion radicals which are normally produced within the cells and which are toxic to biological systems. This is Superoxide dismutase [Mn] (sodA) from Haemophilus influenzae (strain ATCC 51907 / DSM 11121 / KW20 / Rd).